The primary structure comprises 211 residues: CASP-like protein 1B1 (211 aa).

The segment at 1–29 (MDLERGSKTPPSSAPAAAAATTTTSTCCS) is disordered. Over 1 to 55 (MDLERGSKTPPSSAPAAAAATTTTSTCCSNKRPQLRDRLVALQPVVLRAAATLAT) the chain is Cytoplasmic. A compositionally biased stretch (low complexity) spans 9 to 26 (TPPSSAPAAAAATTTTST). The chain crosses the membrane as a helical span at residues 56-76 (AVAAAVMALNAQSYTAVVAIV). Over 77–94 (GTRPLTQTFTTKFRDTPA) the chain is Extracellular. A helical membrane pass occupies residues 95–115 (FVYFVIANAIAAVYNLVMLLF). Over 116–123 (RCLILRRR) the chain is Cytoplasmic. A helical transmembrane segment spans residues 124–144 (MAGLVVHMLDMVIMALLATGA). Residues 145 to 176 (ATAAAMAELGKNGNVHARWNPICDRFGSFCSR) lie on the Extracellular side of the membrane. Residues 177–197 (GGVALASSFTGVALMLALNLL) traverse the membrane as a helical segment. Over 198–211 (SAASNAQCSPGQYE) the chain is Cytoplasmic.

It belongs to the Casparian strip membrane proteins (CASP) family. Homodimer and heterodimers.

It localises to the cell membrane. The sequence is that of CASP-like protein 1B1 from Sorghum bicolor (Sorghum).